The following is a 580-amino-acid chain: G1/S-specific cyclin CLN3 (580 aa).

Positions 454–469 (FTPTSSSSSPSPFNSP) are enriched in low complexity. Disordered stretches follow at residues 454-498 (FTPT…QNSF) and 546-580 (MATA…KKTR). 2 stretches are compositionally biased toward polar residues: residues 470–480 (YKTSSSMTTPD) and 563–580 (TSSV…KKTR).

Belongs to the cyclin family.

In terms of biological role, essential for the control of the cell cycle at the G1/S (start) transition. CLN3 may be an upstream activator of the G1 cyclins which directly catalyze start. This is G1/S-specific cyclin CLN3 (CLN3) from Saccharomyces cerevisiae (strain ATCC 204508 / S288c) (Baker's yeast).